A 246-amino-acid polypeptide reads, in one-letter code: Probable transcriptional regulatory protein WP1214 (246 aa).

Residues 1–22 are disordered; that stretch reads MAGHSQFSNIKHRKGAQDAKRS.

It belongs to the TACO1 family.

The protein localises to the cytoplasm. In Wolbachia pipientis subsp. Culex pipiens (strain wPip), this protein is Probable transcriptional regulatory protein WP1214.